We begin with the raw amino-acid sequence, 146 residues long: Large ribosomal subunit protein uL13 (146 aa).

Belongs to the universal ribosomal protein uL13 family. Part of the 50S ribosomal subunit.

This protein is one of the early assembly proteins of the 50S ribosomal subunit, although it is not seen to bind rRNA by itself. It is important during the early stages of 50S assembly. In Borreliella burgdorferi (strain ATCC 35210 / DSM 4680 / CIP 102532 / B31) (Borrelia burgdorferi), this protein is Large ribosomal subunit protein uL13.